Consider the following 1119-residue polypeptide: Nuclear matrix constituent protein 1 (1119 aa).

Coiled-coil stretches lie at residues leucine 140 to glutamine 226 and leucine 328 to arginine 488. Disordered stretches follow at residues leucine 846–alanine 884, leucine 903–arginine 974, asparagine 989–aspartate 1015, and glycine 1046–methionine 1109. Composition is skewed to basic residues over residues glycine 859–serine 876 and lysine 920–asparagine 929. A compositionally biased stretch (polar residues) spans threonine 1075 to glutamine 1085.

This sequence belongs to the CRWN family.

The protein localises to the nucleus matrix. Its subcellular location is the nucleus lamina. Architectural component of nuclear structure that plays different roles in controlling nuclear size and morphology. The chain is Nuclear matrix constituent protein 1 from Daucus carota subsp. sativus (Carrot).